Consider the following 1183-residue polypeptide: DNA-directed RNA polymerase subunit beta (1183 aa).

It belongs to the RNA polymerase beta chain family. The RNAP catalytic core consists of 2 alpha, 1 beta, 1 beta' and 1 omega subunit. When a sigma factor is associated with the core the holoenzyme is formed, which can initiate transcription.

It catalyses the reaction RNA(n) + a ribonucleoside 5'-triphosphate = RNA(n+1) + diphosphate. DNA-dependent RNA polymerase catalyzes the transcription of DNA into RNA using the four ribonucleoside triphosphates as substrates. The sequence is that of DNA-directed RNA polymerase subunit beta from Staphylococcus aureus (strain MRSA252).